The chain runs to 997 residues: Protein Smaug (997 aa).

Polar residues predominate over residues 1-37 (MKYATGTDNAMTSGISGQTNNSNSASTEMQPTTSTPT). Disordered regions lie at residues 1 to 69 (MKYA…QSQP) and 329 to 370 (LCPA…GSSS). 2 stretches are compositionally biased toward low complexity: residues 44–69 (TPTA…QSQP) and 329–338 (LCPASGSRSS). Residues Ser564 and Ser575 each carry the phosphoserine modification. The interaction with cup stretch occupies residues 583 to 763 (EFKPNYIKFH…KDLKFKLSKM (181 aa)). The 55-residue stretch at 600 to 654 (GIGLWLKSLRLHKYIELFKNMTYEEMLLITEDFLQSVGVTKGASHKLALCIEKLK) folds into the SAM domain. Disordered regions lie at residues 773–892 (HVKP…MQQM) and 944–972 (GSSD…TSAE). Polar residues-rich tracts occupy residues 802 to 822 (NGSN…NFSL) and 854 to 864 (HQPQYKSSSYP). Phosphoserine is present on Ser970.

The protein belongs to the SMAUG family. Interacts with oskar (osk). Binds to the 3'-UTR of nos. Interacts with cup, which in turn recruits eIF4-E, leading to an indirect interaction between smg and eIF4-E that prevents mRNA translation.

The protein resides in the cytoplasm. Its function is as follows. Translation regulator that binds to the 3'-UTR of specific mRNAs such as nanos (nos) and prevent their translation. Prevents translation of unlocalized nos in the bulk cytoplasm via the recruitment of cup. The protein is Protein Smaug of Drosophila erecta (Fruit fly).